We begin with the raw amino-acid sequence, 155 residues long: MELKGKKAIILGDRDGIPGPALEACVRSAGAEVVFASTECFVUTSAGAMDMENQRRVKELAEKYPKEDLVVILGGAEAEASGLAAETVSNGDPAWAGPLAGVQLGLKAYHIFEPEIKEQIDPNVYEEQVSLMEMVLDVEAIVQEVRSIREKYAAW.

Sec-43 is an active-site residue. Position 43 (Sec-43) is a non-standard amino acid, selenocysteine.

It belongs to the GrdA family. As to quaternary structure, monomer. Component of the glycine, sarcosine and betaine reductase complexes, together with components B and C.

It catalyses the reaction acetyl phosphate + [thioredoxin]-disulfide + NH4(+) + H2O = [thioredoxin]-dithiol + glycine + phosphate + H(+). The enzyme catalyses acetyl phosphate + methylamine + [thioredoxin]-disulfide + H2O = sarcosine + [thioredoxin]-dithiol + phosphate + H(+). It carries out the reaction acetyl phosphate + trimethylamine + [thioredoxin]-disulfide + H2O = glycine betaine + [thioredoxin]-dithiol + phosphate + H(+). Functionally, in the first step of glycine, betaine and sarcosine reductases, the substrate is bound to component PB via a Schiff base intermediate. Then the PB-activated substrate is nucleophilically attacked by the selenol anion of component PA to transform it to a carboxymethylated selenoether and the respective amine. By action of component PC, acetyl phosphate is formed, leaving component PA in its oxidized state. Finally component PA becomes reduced by the thioredoxin system to start a new catalytic cycle of reductive deamination. This is Glycine/sarcosine/betaine reductase complex component A (grdA) from Symbiobacterium thermophilum (strain DSM 24528 / JCM 14929 / IAM 14863 / T).